A 1480-amino-acid chain; its full sequence is UDP-N-acetylglucosamine--peptide N-acetylglucosaminyltransferase (1480 aa).

TPR repeat units lie at residues 38-71, 113-146, 176-209, and 288-321; these read IFLY…SKQK, VQVL…STSN, ATIL…IKDP, and STIC…QPSF. Residues 468 to 485 show a composition bias toward basic and acidic residues; that stretch reads PQEKESPKSDKIASEKPL. A disordered region spans residues 468 to 497; that stretch reads PQEKESPKSDKIASEKPLVESNPGRSRTPS. TPR repeat units lie at residues 613–646 and 648–680; these read YEPF…NPRF and DGYL…DPDN. Residues 1093–1128 form a disordered region; it reads LSLDGSDATSSSVDSGIGSRTHSEAPIGGGDKDEGA. Over residues 1099–1112 the composition is skewed to polar residues; it reads DATSSSVDSGIGSR. Residues Gln-1269, Lys-1272, 1333-1336, 1351-1353, and Asp-1357 contribute to the UDP site; these read HIRR and GST.

This sequence belongs to the glycosyltransferase 41 family. O-GlcNAc transferase subfamily.

The protein resides in the cytoplasm. The protein localises to the nucleus. It catalyses the reaction L-seryl-[protein] + UDP-N-acetyl-alpha-D-glucosamine = 3-O-(N-acetyl-beta-D-glucosaminyl)-L-seryl-[protein] + UDP + H(+). The enzyme catalyses L-threonyl-[protein] + UDP-N-acetyl-alpha-D-glucosamine = 3-O-(N-acetyl-beta-D-glucosaminyl)-L-threonyl-[protein] + UDP + H(+). It functions in the pathway protein modification; protein glycosylation. In terms of biological role, catalyzes the transfer of a single N-acetylglucosamine from UDP-GlcNAc to a serine or threonine residue in cytoplasmic and nuclear proteins resulting in their modification with a beta-linked N-acetylglucosamine (O-GlcNAc). The chain is UDP-N-acetylglucosamine--peptide N-acetylglucosaminyltransferase from Giardia intestinalis (strain ATCC 50803 / WB clone C6) (Giardia lamblia).